A 199-amino-acid polypeptide reads, in one-letter code: Potassium-transporting ATPase KdpC subunit (199 aa).

Residues 21-43 (LALLFVCGVVYTGTVTQLGGALF) form a helical membrane-spanning segment.

This sequence belongs to the KdpC family. The system is composed of three essential subunits: KdpA, KdpB and KdpC.

It localises to the cell inner membrane. Its function is as follows. Part of the high-affinity ATP-driven potassium transport (or Kdp) system, which catalyzes the hydrolysis of ATP coupled with the electrogenic transport of potassium into the cytoplasm. This subunit acts as a catalytic chaperone that increases the ATP-binding affinity of the ATP-hydrolyzing subunit KdpB by the formation of a transient KdpB/KdpC/ATP ternary complex. The sequence is that of Potassium-transporting ATPase KdpC subunit from Shewanella putrefaciens (strain CN-32 / ATCC BAA-453).